A 192-amino-acid polypeptide reads, in one-letter code: Putative molybdenum cofactor guanylyltransferase (192 aa).

GTP contacts are provided by residues 8 to 10 (LAG), K21, D67, and D101. D101 contacts Mg(2+).

This sequence belongs to the MobA family. As to quaternary structure, monomer. It depends on Mg(2+) as a cofactor.

Its subcellular location is the cytoplasm. It catalyses the reaction Mo-molybdopterin + GTP + H(+) = Mo-molybdopterin guanine dinucleotide + diphosphate. Functionally, transfers a GMP moiety from GTP to Mo-molybdopterin (Mo-MPT) cofactor (Moco or molybdenum cofactor) to form Mo-molybdopterin guanine dinucleotide (Mo-MGD) cofactor. This is Putative molybdenum cofactor guanylyltransferase from Neisseria meningitidis serogroup B (strain ATCC BAA-335 / MC58).